Reading from the N-terminus, the 608-residue chain is Albumin (608 aa).

The N-terminal stretch at 1–18 is a signal peptide; that stretch reads MKWVTFISLLFLFSSAYS. Residues 19 to 24 constitute a propeptide that is removed on maturation; it reads RGVFRR. 3 consecutive Albumin domains span residues 19-210, 211-403, and 404-601; these read RGVF…DALE, GKSL…EFQP, and LVDE…KLVE. Position 27 (His-27) interacts with Cu cation. Phosphoserine is present on Ser-29. Ca(2+) contacts are provided by Glu-30 and Asp-37. A disulfide bridge connects residues Cys-77 and Cys-86. Phosphoserine is present on residues Ser-82 and Ser-89. His-91 contributes to the Zn(2+) binding site. Cystine bridges form between Cys-99-Cys-115, Cys-114-Cys-125, Cys-148-Cys-193, Cys-192-Cys-201, Cys-224-Cys-270, and Cys-269-Cys-277. Thr-107 bears the Phosphothreonine mark. At Lys-229 the chain carries N6-succinyllysine. Residue Glu-268 participates in Ca(2+) binding. Residues His-271 and Asp-273 each coordinate Zn(2+). Asp-273, Glu-276, Asp-279, and Asp-283 together coordinate Ca(2+). Cystine bridges form between Cys-289–Cys-303, Cys-302–Cys-313, Cys-340–Cys-385, Cys-384–Cys-393, Cys-416–Cys-462, Cys-461–Cys-472, Cys-485–Cys-501, and Cys-500–Cys-511. Ser-297 is modified (phosphoserine). Residue Ser-443 is modified to Phosphoserine. Residues Thr-444 and Thr-446 each carry the phosphothreonine modification. Lys-460 is modified (N6-succinyllysine). Ser-513 bears the Phosphoserine mark. 2 disulfides stabilise this stretch: Cys-538-Cys-583 and Cys-582-Cys-591. Lys-558 carries the N6-methyllysine modification. At Thr-570 the chain carries Phosphothreonine. Lys-588 is modified (N6-succinyllysine).

This sequence belongs to the ALB/AFP/VDB family. As to quaternary structure, interacts with FCGRT; this interaction regulates ALB homeostasis. Interacts with TASOR. In plasma, occurs in a covalently-linked complex with chromophore-bound alpha-1-microglobulin; this interaction does not prevent fatty acid binding to ALB. Phosphorylated by FAM20C in the extracellular medium. As to expression, plasma.

It is found in the secreted. Binds water, Ca(2+), Na(+), K(+), fatty acids, hormones, bilirubin and drugs. Its main function is the regulation of the colloidal osmotic pressure of blood. Major zinc transporter in plasma, typically binds about 80% of all plasma zinc. Major calcium and magnesium transporter in plasma, binds approximately 45% of circulating calcium and magnesium in plasma. Potentially has more than two calcium-binding sites and might additionally bind calcium in a non-specific manner. The shared binding site between zinc and calcium at residue Asp-273 suggests a crosstalk between zinc and calcium transport in the blood. The rank order of affinity is zinc &gt; calcium &gt; magnesium. Binds to the bacterial siderophore enterobactin and inhibits enterobactin-mediated iron uptake of E.coli from ferric transferrin, and may thereby limit the utilization of iron and growth of enteric bacteria such as E.coli. Does not prevent iron uptake by the bacterial siderophore aerobactin. This Oryctolagus cuniculus (Rabbit) protein is Albumin (ALB).